The primary structure comprises 121 residues: Basic phospholipase A2 homolog piratoxin-2 (121 aa).

Cystine bridges form between cysteine 26–cysteine 115, cysteine 28–cysteine 44, cysteine 43–cysteine 95, cysteine 49–cysteine 121, cysteine 50–cysteine 88, cysteine 57–cysteine 81, and cysteine 75–cysteine 86. The important for membrane-damaging activities in eukaryotes and bacteria; heparin-binding stretch occupies residues 105 to 117 (KKYRYHLKPFCKK).

This sequence belongs to the phospholipase A2 family. Group II subfamily. K49 sub-subfamily. In terms of assembly, homodimer; non-covalently linked. As to expression, expressed by the venom gland.

It localises to the secreted. Functionally, snake venom phospholipase A2 (PLA2) homolog that lacks enzymatic activity. Shows myotoxic activity and edema-inducing activities in vivo. A model of myotoxic mechanism has been proposed: an apo Lys49-PLA2 is activated by the entrance of a hydrophobic molecule (e.g. fatty acid) at the hydrophobic channel of the protein leading to a reorientation of a monomer. This reorientation causes a transition between 'inactive' to 'active' states, causing alignment of C-terminal and membrane-docking sites (MDoS) side-by-side and putting the membrane-disruption sites (MDiS) in the same plane, exposed to solvent and in a symmetric position for both monomers. The MDoS region stabilizes the toxin on membrane by the interaction of charged residues with phospholipid head groups. Subsequently, the MDiS region destabilizes the membrane with penetration of hydrophobic residues. This insertion causes a disorganization of the membrane, allowing an uncontrolled influx of ions (i.e. calcium and sodium), and eventually triggering irreversible intracellular alterations and cell death. The chain is Basic phospholipase A2 homolog piratoxin-2 from Bothrops pirajai (Piraja's lancehead).